Here is a 412-residue protein sequence, read N- to C-terminus: Probable cystathionine gamma-synthase 2 (412 aa).

Residues Tyr76, Arg78, Gly106, Met107, Tyr131, Ser226, and Thr228 each coordinate pyridoxal 5'-phosphate. N6-(pyridoxal phosphate)lysine is present on Lys229.

Belongs to the trans-sulfuration enzymes family. Pyridoxal 5'-phosphate serves as cofactor.

It catalyses the reaction O-phospho-L-homoserine + L-cysteine = L,L-cystathionine + phosphate. The catalysed reaction is O-succinyl-L-homoserine + L-cysteine = L,L-cystathionine + succinate + H(+). Its pathway is amino-acid biosynthesis; L-methionine biosynthesis via de novo pathway; L-cystathionine from O-succinyl-L-homoserine: step 1/1. Catalyzes the first committed step of methionine (Met) biosynthesis. Catalyzes the formation of L-cystathionine from homoserine esters and L-cysteine, via a gamma-replacement reaction. The sequence is that of Probable cystathionine gamma-synthase 2 from Arabidopsis thaliana (Mouse-ear cress).